A 252-amino-acid polypeptide reads, in one-letter code: Pantothenate synthetase (252 aa).

ATP is bound at residue 29–36 (MGNLHAGH). The active-site Proton donor is His-36. Gln-60 serves as a coordination point for (R)-pantoate. Beta-alanine is bound at residue Gln-60. Position 146–149 (146–149 (GEKD)) interacts with ATP. Gln-152 is a (R)-pantoate binding site. Residues Val-175 and 183–186 (CSSR) contribute to the ATP site.

This sequence belongs to the pantothenate synthetase family. Homodimer.

Its subcellular location is the cytoplasm. The catalysed reaction is (R)-pantoate + beta-alanine + ATP = (R)-pantothenate + AMP + diphosphate + H(+). It participates in cofactor biosynthesis; (R)-pantothenate biosynthesis; (R)-pantothenate from (R)-pantoate and beta-alanine: step 1/1. In terms of biological role, catalyzes the condensation of pantoate with beta-alanine in an ATP-dependent reaction via a pantoyl-adenylate intermediate. In Legionella pneumophila subsp. pneumophila (strain Philadelphia 1 / ATCC 33152 / DSM 7513), this protein is Pantothenate synthetase.